A 143-amino-acid polypeptide reads, in one-letter code: Hemoglobin subunit alpha-1 (143 aa).

Position 2 is an N-acetylserine (serine 2). The Globin domain occupies serine 2 to arginine 143. Residue histidine 60 participates in O2 binding. A heme b-binding site is contributed by histidine 89.

The protein belongs to the globin family. Hb 1 is a heterotetramer of two alpha-1 and two beta-1 chains. Hb 3 is a heterotetramer of two alpha-1 and two beta-2 chains. In terms of tissue distribution, red blood cells.

Involved in oxygen transport from gills to the various peripheral tissues. This is Hemoglobin subunit alpha-1 (hba1) from Gadus morhua (Atlantic cod).